The primary structure comprises 399 residues: Phosphate acyltransferase (399 aa).

It belongs to the PlsX family. In terms of assembly, homodimer. Probably interacts with PlsY.

Its subcellular location is the cytoplasm. It carries out the reaction a fatty acyl-[ACP] + phosphate = an acyl phosphate + holo-[ACP]. It participates in lipid metabolism; phospholipid metabolism. In terms of biological role, catalyzes the reversible formation of acyl-phosphate (acyl-PO(4)) from acyl-[acyl-carrier-protein] (acyl-ACP). This enzyme utilizes acyl-ACP as fatty acyl donor, but not acyl-CoA. The protein is Phosphate acyltransferase of Rhodobacter capsulatus (Rhodopseudomonas capsulata).